Reading from the N-terminus, the 486-residue chain is Ribulose bisphosphate carboxylase large chain (486 aa).

Substrate contacts are provided by Asn126 and Thr176. Lys178 functions as the Proton acceptor in the catalytic mechanism. Residue Lys180 coordinates substrate. Residues Lys204, Asp206, and Glu207 each contribute to the Mg(2+) site. The residue at position 204 (Lys204) is an N6-carboxylysine. The active-site Proton acceptor is the His296. Substrate is bound by residues Arg297, His329, and Ser381.

It belongs to the RuBisCO large chain family. Type I subfamily. As to quaternary structure, heterohexadecamer of 8 large chains and 8 small chains. The cofactor is Mg(2+).

It carries out the reaction 2 (2R)-3-phosphoglycerate + 2 H(+) = D-ribulose 1,5-bisphosphate + CO2 + H2O. The enzyme catalyses D-ribulose 1,5-bisphosphate + O2 = 2-phosphoglycolate + (2R)-3-phosphoglycerate + 2 H(+). In terms of biological role, ruBisCO catalyzes two reactions: the carboxylation of D-ribulose 1,5-bisphosphate, the primary event in carbon dioxide fixation, as well as the oxidative fragmentation of the pentose substrate. Both reactions occur simultaneously and in competition at the same active site. In Methylacidiphilum infernorum (isolate V4) (Methylokorus infernorum (strain V4)), this protein is Ribulose bisphosphate carboxylase large chain.